Consider the following 209-residue polypeptide: Kynurenine formamidase (209 aa).

Tryptophan 20 provides a ligand contact to substrate. Residues histidine 50, histidine 54, and aspartate 56 each contribute to the Zn(2+) site. The active-site Proton donor/acceptor is the histidine 60. Zn(2+)-binding residues include histidine 161 and glutamate 173.

Belongs to the Cyclase 1 superfamily. KynB family. In terms of assembly, homodimer. The cofactor is Zn(2+).

The enzyme catalyses N-formyl-L-kynurenine + H2O = L-kynurenine + formate + H(+). It participates in amino-acid degradation; L-tryptophan degradation via kynurenine pathway; L-kynurenine from L-tryptophan: step 2/2. Its function is as follows. Catalyzes the hydrolysis of N-formyl-L-kynurenine to L-kynurenine, the second step in the kynurenine pathway of tryptophan degradation. The chain is Kynurenine formamidase from Bacillus thuringiensis (strain Al Hakam).